Consider the following 408-residue polypeptide: Acetylornithine aminotransferase (408 aa).

Pyridoxal 5'-phosphate contacts are provided by residues Gly107 to Thr108 and Phe141. Arg144 provides a ligand contact to N(2)-acetyl-L-ornithine. Asp227–Gln230 is a pyridoxal 5'-phosphate binding site. Lys256 carries the N6-(pyridoxal phosphate)lysine modification. Thr284 is a N(2)-acetyl-L-ornithine binding site. Residue Thr285 participates in pyridoxal 5'-phosphate binding.

This sequence belongs to the class-III pyridoxal-phosphate-dependent aminotransferase family. ArgD subfamily. As to quaternary structure, homodimer. Requires pyridoxal 5'-phosphate as cofactor.

It localises to the cytoplasm. The enzyme catalyses N(2)-acetyl-L-ornithine + 2-oxoglutarate = N-acetyl-L-glutamate 5-semialdehyde + L-glutamate. Its pathway is amino-acid biosynthesis; L-arginine biosynthesis; N(2)-acetyl-L-ornithine from L-glutamate: step 4/4. This chain is Acetylornithine aminotransferase, found in Xanthomonas campestris pv. campestris (strain ATCC 33913 / DSM 3586 / NCPPB 528 / LMG 568 / P 25).